The following is a 161-amino-acid chain: Crossover junction endodeoxyribonuclease RuvC (161 aa).

Residues Asp7, Glu67, and Asp139 contribute to the active site. Asp7, Glu67, and Asp139 together coordinate Mg(2+).

It belongs to the RuvC family. In terms of assembly, homodimer which binds Holliday junction (HJ) DNA. The HJ becomes 2-fold symmetrical on binding to RuvC with unstacked arms; it has a different conformation from HJ DNA in complex with RuvA. In the full resolvosome a probable DNA-RuvA(4)-RuvB(12)-RuvC(2) complex forms which resolves the HJ. Requires Mg(2+) as cofactor.

It localises to the cytoplasm. It carries out the reaction Endonucleolytic cleavage at a junction such as a reciprocal single-stranded crossover between two homologous DNA duplexes (Holliday junction).. Its function is as follows. The RuvA-RuvB-RuvC complex processes Holliday junction (HJ) DNA during genetic recombination and DNA repair. Endonuclease that resolves HJ intermediates. Cleaves cruciform DNA by making single-stranded nicks across the HJ at symmetrical positions within the homologous arms, yielding a 5'-phosphate and a 3'-hydroxyl group; requires a central core of homology in the junction. The consensus cleavage sequence is 5'-(A/T)TT(C/G)-3'. Cleavage occurs on the 3'-side of the TT dinucleotide at the point of strand exchange. HJ branch migration catalyzed by RuvA-RuvB allows RuvC to scan DNA until it finds its consensus sequence, where it cleaves and resolves the cruciform DNA. This Syntrophotalea carbinolica (strain DSM 2380 / NBRC 103641 / GraBd1) (Pelobacter carbinolicus) protein is Crossover junction endodeoxyribonuclease RuvC.